Here is a 320-residue protein sequence, read N- to C-terminus: Mitochondrial ribosome-associated GTPase 1 (320 aa).

Residues 37-209 enclose the CP-type G domain; that stretch reads LKQMRASPRK…LLDTPGVLPP (173 aa). GTP is bound by residues 81–84, 153–158, and Gly-205; these read NKMD and NVGKSS.

It belongs to the TRAFAC class YlqF/YawG GTPase family. MTG1 subfamily.

It localises to the mitochondrion inner membrane. Functionally, plays a role in the regulation of the mitochondrial ribosome assembly and of translational activity. Displays mitochondrial GTPase activity. The sequence is that of Mitochondrial ribosome-associated GTPase 1 from Ictalurus punctatus (Channel catfish).